Here is a 1035-residue protein sequence, read N- to C-terminus: NHS-like protein 3 (1035 aa).

The N-myristoyl glycine moiety is linked to residue V2. 3 disordered regions span residues 23–44, 76–105, and 133–162; these read KAEN…AVDE, QEKQ…DEDN, and IQRK…RRST. Over residues 76-90 the composition is skewed to basic and acidic residues; that stretch reads QEKQKLNKGGWDHGD. S93, S138, S145, and S161 each carry phosphoserine. T162 carries the post-translational modification Phosphothreonine. Residue S215 is modified to Phosphoserine. Position 320 is an asymmetric dimethylarginine (R320). A phosphoserine mark is found at S322, S327, S330, S338, S339, S341, and S342. Disordered stretches follow at residues 332 to 869 and 885 to 1035; these read RSLG…APSS and SEGL…KELA. Residues 338–365 show a composition bias toward low complexity; it reads SSVSSPQPRSRHPSSSSDTWSHSQSSDT. Positions 366–388 are enriched in polar residues; the sequence is IVSDGSTLSSKGGSEGQPESSTA. S400, S404, and S409 each carry phosphoserine. The segment covering 411–429 has biased composition (polar residues); it reads AEASDTLSIRSSGQLSGRS. Residues 431-449 are compositionally biased toward basic residues; that stretch reads SLRKLKRPPPPPRRTHSLH. The segment covering 517-532 has biased composition (low complexity); that stretch reads RTLSPSSGYSSQSGTP. T531 is subject to Phosphothreonine. Residues 543–552 show a composition bias toward pro residues; that stretch reads PASPGKAQPP. S545 carries the phosphoserine modification. Over residues 562 to 589 the composition is skewed to low complexity; it reads SPGASVSSSLTSLCSSSSDPAPSDRSGP. T593 is subject to Phosphothreonine. The span at 602 to 624 shows a compositional bias: pro residues; it reads PPHPKVPAPFSPPPSKPRSPNPA. S612 carries the post-translational modification Phosphoserine. Composition is skewed to low complexity over residues 625 to 645 and 652 to 662; these read APAL…DASP and QTTLTPLQESP. Phosphoserine occurs at positions 669 and 673. Composition is skewed to pro residues over residues 669–685 and 709–718; these read SPPP…PPPT and NWPPPPPPAP. The segment covering 737–765 has biased composition (low complexity); it reads SVASPEPAGPSGSPELVSSPAASSSSATA. Positions 771-784 are enriched in pro residues; sequence PGSPDPPPAPPAPA. Residues 838–848 are compositionally biased toward low complexity; that stretch reads GAPTPALGPSA. 3 positions are modified to phosphoserine: S858, S862, and S868. Over residues 894-906 the composition is skewed to pro residues; the sequence is NGPPEAEPRPPQS. A phosphoserine mark is found at S929, S959, S971, and S979. Positions 961–980 are enriched in pro residues; the sequence is KAPPPVARKPSVGVPPPASP. Over residues 999–1008 the composition is skewed to basic and acidic residues; that stretch reads TQDRTKRELA.

As to expression, expressed in lung.

Its function is as follows. Able to directly activate the TNF-NFkappaB signaling pathway. This chain is NHS-like protein 3, found in Homo sapiens (Human).